Here is a 307-residue protein sequence, read N- to C-terminus: Glycerol-3-phosphate dehydrogenase [NAD(P)+] (307 aa).

W14, R34, R35, and K82 together coordinate NADPH. Sn-glycerol 3-phosphate is bound by residues K82 and G110. An NADPH-binding site is contributed by S114. Residues K165, D218, S228, R229, and N230 each coordinate sn-glycerol 3-phosphate. K165 serves as the catalytic Proton acceptor. R229 is an NADPH binding site. E255 provides a ligand contact to NADPH.

This sequence belongs to the NAD-dependent glycerol-3-phosphate dehydrogenase family.

The protein resides in the cytoplasm. The catalysed reaction is sn-glycerol 3-phosphate + NAD(+) = dihydroxyacetone phosphate + NADH + H(+). It carries out the reaction sn-glycerol 3-phosphate + NADP(+) = dihydroxyacetone phosphate + NADPH + H(+). It participates in membrane lipid metabolism; glycerophospholipid metabolism. In terms of biological role, catalyzes the reduction of the glycolytic intermediate dihydroxyacetone phosphate (DHAP) to sn-glycerol 3-phosphate (G3P), the key precursor for phospholipid synthesis. This Nostoc sp. (strain PCC 7120 / SAG 25.82 / UTEX 2576) protein is Glycerol-3-phosphate dehydrogenase [NAD(P)+].